A 151-amino-acid chain; its full sequence is UPF0756 membrane protein GWCH70_2680 (151 aa).

4 helical membrane passes run 5 to 25 (ILFL…SLMI), 53 to 73 (WGVT…EIGF), 86 to 106 (WIAL…VTLL), and 116 to 136 (LVFG…GPLI).

Belongs to the UPF0756 family.

It is found in the cell membrane. The sequence is that of UPF0756 membrane protein GWCH70_2680 from Geobacillus sp. (strain WCH70).